Reading from the N-terminus, the 1029-residue chain is U2 snRNP-associated SURP motif-containing protein (1029 aa).

Disordered stretches follow at residues 1 to 111 and 141 to 274; these read MADK…EDEK and VNAA…PSTT. Position 2 is an N-acetylalanine (Ala2). The segment covering 7 to 16 has biased composition (polar residues); it reads GGSQKASSKT. Over residues 45–54 the composition is skewed to basic residues; that stretch reads TRPKSPRKHN. Residues 55–64 are compositionally biased toward basic and acidic residues; sequence YRNESARESL. The residue at position 67 (Ser67) is a Phosphoserine. Residue Lys80 forms a Glycyl lysine isopeptide (Lys-Gly) (interchain with G-Cter in SUMO2) linkage. A coiled-coil region spans residues 92–121; it reads AKRTLSKKEQEELKKKEDEKAAAEIYEEFL. Composition is skewed to basic and acidic residues over residues 97–111 and 144–155; these read SKKE…EDEK and AKEEHETDEKRG. Glycyl lysine isopeptide (Lys-Gly) (interchain with G-Cter in SUMO2) cross-links involve residues Lys145 and Lys168. The span at 169–178 shows a compositional bias: polar residues; that stretch reads NPPNQSSNER. Positions 186 to 222 are enriched in basic and acidic residues; the sequence is ETKKPPLKKGEKEKKKSNLELFKEELKQIQEERDERH. Residues 192 to 232 are a coiled coil; that stretch reads LKKGEKEKKKSNLELFKEELKQIQEERDERHKTKGRLSRFE. Ser202 bears the Phosphoserine mark. Lys208 is covalently cross-linked (Glycyl lysine isopeptide (Lys-Gly) (interchain with G-Cter in SUMO2)). Ser236 is modified (phosphoserine). A compositionally biased stretch (basic and acidic residues) spans 239–249; sequence DGQRRSMDAPS. Positions 274–355 constitute an RRM domain; sequence TNLYLGNINP…FEMKLGWGKA (82 aa). The SURP motif repeat unit spans residues 430 to 473; it reads LIHRMIEFVVREGPMFEAMIMNREINNPMFRFLFENQTPAHVYY. A Phosphoserine modification is found at Ser485. The CID domain occupies 534–679; it reads LKEEQRDKLE…KLQNIFLGLV (146 aa). Position 719 is a phosphothreonine (Thr719). Residues Lys748 and Lys749 each participate in a glycyl lysine isopeptide (Lys-Gly) (interchain with G-Cter in SUMO2) cross-link. Lys760 is modified (N6-acetyllysine; alternate). A Glycyl lysine isopeptide (Lys-Gly) (interchain with G-Cter in SUMO2); alternate cross-link involves residue Lys760. Disordered stretches follow at residues 778–841 and 855–1029; these read KWEL…EEKR and QDEL…KNKH. Residues 786-806 are compositionally biased toward acidic residues; it reads EESEEEENQNQEEESEDEEDT. 3 positions are modified to phosphoserine: Ser788, Ser800, and Ser811. Composition is skewed to basic and acidic residues over residues 810–841 and 874–922; these read KSEE…EEKR and QVEH…TPTR. Glycyl lysine isopeptide (Lys-Gly) (interchain with G-Cter in SUMO2) cross-links involve residues Lys822, Lys829, and Lys832. A coiled-coil region spans residues 837 to 915; it reads SEEKRAKLRE…ESRSKDKKEK (79 aa). Position 931 is a phosphothreonine (Thr931). Ser946 and Ser948 each carry phosphoserine. The span at 950-980 shows a compositional bias: basic and acidic residues; sequence KSERSERSERSHKESSRSRSSHKDSPRDVSK. The span at 991–1029 shows a compositional bias: basic residues; it reads TPKRSRRSRSRSPKKSGKKSRSQSRSPHRSHKKSKKNKH.

Belongs to the splicing factor SR family. In terms of assembly, interacts with ERBB4.

It is found in the nucleus. The protein is U2 snRNP-associated SURP motif-containing protein (U2SURP) of Homo sapiens (Human).